The primary structure comprises 372 residues: uncharacterized protein (372 aa).

The disordered stretch occupies residues 49-72 (FSHKGGGKGGGSGAGSNDGGCSGE). Residues 55–70 (GKGGGSGAGSNDGGCS) show a composition bias toward gly residues.

This is an uncharacterized protein from Halorubrum lacusprofundi (strain ATCC 49239 / DSM 5036 / JCM 8891 / ACAM 34).